Reading from the N-terminus, the 510-residue chain is 2,3-bisphosphoglycerate-independent phosphoglycerate mutase (510 aa).

Mn(2+) contacts are provided by Asp-15 and Ser-65. Ser-65 acts as the Phosphoserine intermediate in catalysis. Substrate-binding positions include His-126, 155-156 (RD), Arg-187, Arg-193, 259-262 (RPDR), and Lys-332. The Mn(2+) site is built by Asp-399, His-403, Asp-440, His-441, and His-458.

This sequence belongs to the BPG-independent phosphoglycerate mutase family. Requires Mn(2+) as cofactor.

Its subcellular location is the plastid. It localises to the chloroplast. The catalysed reaction is (2R)-2-phosphoglycerate = (2R)-3-phosphoglycerate. It functions in the pathway carbohydrate degradation; glycolysis; pyruvate from D-glyceraldehyde 3-phosphate: step 3/5. Functionally, catalyzes the interconversion of 2-phosphoglycerate and 3-phosphoglycerate. This Antithamnion sp. (Red alga) protein is 2,3-bisphosphoglycerate-independent phosphoglycerate mutase.